The sequence spans 578 residues: Vesicular acetylcholine transporter (578 aa).

The Cytoplasmic portion of the chain corresponds to 1 to 32; the sequence is MASFQIPVINLEVREVKDIVWEKIQEPVNQRR. The chain crosses the membrane as a helical span at residues 33 to 53; that stretch reads LILVIVSIALLLDNMLYMVIV. The Lumenal, vesicle segment spans residues 54 to 98; sequence PIIPDYLREIGSFDDGPTPPPLRDNITGKIIPVHHDHHGQDSATG. A glycan (N-linked (GlcNAc...) asparagine) is linked at Asn-78. Residues 99 to 119 form a helical membrane-spanning segment; the sequence is ILFASKAIVQLMVNPFSGGLI. The Cytoplasmic portion of the chain corresponds to 120–125; that stretch reads DKIGYD. The chain crosses the membrane as a helical span at residues 126–146; that stretch reads LPMMIGLTIMFFSTAVFACGS. Over 147–154 the chain is Lumenal, vesicle; that stretch reads SYSVLFFA. The chain crosses the membrane as a helical span at residues 155–175; the sequence is RSLQGAGSAFADTAGLAMIAD. Residues 176–187 lie on the Cytoplasmic side of the membrane; it reads RFTEENERSQAL. The chain crosses the membrane as a helical span at residues 188 to 208; the sequence is GIALAFISFGCLVAPPFGGAL. The Lumenal, vesicle portion of the chain corresponds to 209–215; that stretch reads YQFAGKE. Residues 216–236 form a helical membrane-spanning segment; that stretch reads VPFLILALVCLLDGLMLLLVM. Residues 237-263 lie on the Cytoplasmic side of the membrane; the sequence is KPVKEAMKQSKDVQDQVIPIWRLLMDP. A helical transmembrane segment spans residues 264–284; sequence YIAVCAGALTMSNVALAFLEP. The Lumenal, vesicle segment spans residues 285–299; sequence TISLWMEDNMTTDNW. Asn-293 carries N-linked (GlcNAc...) asparagine glycosylation. The helical transmembrane segment at 300-320 threads the bilayer; that stretch reads KIGMVWLPAFFPHVLGVVITV. The Cytoplasmic portion of the chain corresponds to 321 to 330; sequence KMARKYPQHQ. Residues 331-351 form a helical membrane-spanning segment; the sequence is WLMAAGGLALEGFSCFIIPFC. Residues 352–355 are Lumenal, vesicle-facing; the sequence is SGYK. The helical transmembrane segment at 356-376 threads the bilayer; sequence MLMLPICVICFGIALIDTALL. At 377-387 the chain is on the cytoplasmic side; it reads PTLGYLVDVRY. The helical transmembrane segment at 388–408 threads the bilayer; sequence VSVYGSIYAIADISYSIAYAV. Topologically, residues 409–413 are lumenal, vesicle; the sequence is GPIIA. The helical transmembrane segment at 414-434 threads the bilayer; it reads GGVVEAIGFTALNFLIAFSNL. At 435-578 the chain is on the cytoplasmic side; sequence AYVPVLRKLR…APANPFRQGF (144 aa). 2 stretches are compositionally biased toward low complexity: residues 507–534 and 549–563; these read EYQQQQQGYQQGYQQDQGYQPGYQEQGG and QQQQQQQQQQQQQVQ. The segment at 507-578 is disordered; sequence EYQQQQQGYQ…APANPFRQGF (72 aa).

Belongs to the major facilitator superfamily. Vesicular transporter family.

The protein resides in the membrane. Functionally, involved in acetylcholine transport into synaptic vesicles. The chain is Vesicular acetylcholine transporter (VAChT) from Drosophila melanogaster (Fruit fly).